Consider the following 202-residue polypeptide: Dephospho-CoA kinase (202 aa).

The 199-residue stretch at 4–202 (VIGLTGGIAT…TDKGFINKER (199 aa)) folds into the DPCK domain. 12–17 (ATGKST) is an ATP binding site.

The protein belongs to the CoaE family.

The protein localises to the cytoplasm. The enzyme catalyses 3'-dephospho-CoA + ATP = ADP + CoA + H(+). It functions in the pathway cofactor biosynthesis; coenzyme A biosynthesis; CoA from (R)-pantothenate: step 5/5. Its function is as follows. Catalyzes the phosphorylation of the 3'-hydroxyl group of dephosphocoenzyme A to form coenzyme A. This is Dephospho-CoA kinase from Staphylococcus haemolyticus (strain JCSC1435).